The following is a 2498-amino-acid chain: PKS-NRPS hybrid synthetase acdB (2498 aa).

Residues 34–427 (FEQAAHAHFD…GRADSQVKIR (394 aa)) are adenylation (A) domain. Residues 531–606 (QPATELERDI…SLAGYLMDMD (76 aa)) enclose the Carrier 1 domain. O-(pantetheine 4'-phosphoryl)serine is present on Ser566. The region spanning 627-1058 (SDDIAVVSMA…GTNAHVIVEE (432 aa)) is the Ketosynthase family 3 (KS3) domain. Residues Cys802, His938, and His979 each act as for beta-ketoacyl synthase activity in the active site. The segment at 1165 to 1485 (LFAGQGSQQL…EILARLHVQH (321 aa)) is malonyl-CoA:ACP transacylase (MAT) domain. A ketoreductase (KR) domain region spans residues 1739 to 1917 (GAVLITGGLS…PAVCVAYGPL (179 aa)). The 76-residue stretch at 2017-2092 (EILLRTIQEA…ELSRYLLPQL (76 aa)) folds into the Carrier 2 domain. An O-(pantetheine 4'-phosphoryl)serine modification is found at Ser2052. The segment at 2149-2378 (VTGATEFVGA…FPVDYVCRTI (230 aa)) is thioester reductase (TE) domain.

In the C-terminal section; belongs to the NRP synthetase family. The cofactor is pantetheine 4'-phosphate.

The protein operates within secondary metabolite biosynthesis. Functionally, PKS-NRPS hybrid synthetase; part of the gene cluster that mediates the biosynthesis of aspcandine, a pyrrolobenzazepine alkaloid. Initially, the indoleamine 2,3-dioxygenase acdA accepts L-tryptophan and performs the oxidative opening of the indole ring to yield N'-formyl-L-kynurenine, which undergoes the spontaneous deformylation reaction to provide L-kynurenine. The kynurenine 3-monooxygenase acdD then hydroxylates L-kynurenine to afford 3-hydroxy-L-kynurenine. 3-hydroxy-L-kynurenine is activated by the A domain of the NRPS-PKS acdB and subsequently loaded onto the enzyme. The KS domain conducts the decarboxylative condensation of the 3-hydroxy-L-kynurenyl and malonyl moieties, and subsequent nucleophilic attacks by the two amino groups would occur nonenzymatically at two distinct positions, achieving the chain release and the construction of the tricyclic system. Finally, a dehydration reaction completes the biosynthesis to yield aspcandine. This chain is PKS-NRPS hybrid synthetase acdB, found in Aspergillus candidus.